The sequence spans 352 residues: Divinyl chlorophyll a/b light-harvesting protein PcbB (352 aa).

The next 6 helical transmembrane spans lie at 27-47 (FIAA…AFTL), 89-109 (CTVI…GGIL), 142-162 (FILG…VEWA), 203-223 (VMGG…FHII), 243-263 (AVLS…AFWS), and 307-327 (LANV…WHAL).

It belongs to the PsbB/PsbC family. IsiA/Pcb subfamily. As to quaternary structure, the antenna complex consists of divinyl chlorophylls (a and b) and divinyl chlorophyll a/b binding proteins and binds more divinyl chlorophyll b than does the antenna complex from high-light-adapted Prochlorococcus. Divinyl chlorophyll a serves as cofactor. Requires divinyl chlorophyll b as cofactor.

The protein resides in the cellular thylakoid membrane. Functionally, the antenna complex functions as a light receptor, it captures and delivers excitation energy to photosystems II and I. The Prochlorales pcb genes are not related to higher plant LHCs. The chain is Divinyl chlorophyll a/b light-harvesting protein PcbB (pcbB) from Prochlorococcus marinus (strain NATL2A).